Consider the following 605-residue polypeptide: Bifunctional purine biosynthesis protein ADE16 (605 aa).

The 147-residue stretch at 1 to 147 folds into the MGS-like domain; it reads MSSEAPIALL…KNHGRVSIIS (147 aa). Residues 35–38, 65–68, 102–103, and 126–127 each bind IMP; these read SGGT, RVKT, CN, and DI. The Proton donor/acceptor; for FAICAR cyclization activity role is filled by Lys-138. 5-amino-1-(5-phospho-beta-D-ribosyl)imidazole-4-carboxamide is bound by residues 219–220, His-279, Gly-327, Asp-350, Asn-442, and Arg-462; that span reads RY. His-279 serves as the catalytic Proton acceptor; for AICAR formyltransferase activity. Ile-463 is a (6R)-10-formyltetrahydrofolate binding site. 5-amino-1-(5-phospho-beta-D-ribosyl)imidazole-4-carboxamide is bound at residue Phe-554. A (6R)-10-formyltetrahydrofolate-binding site is contributed by Asp-559. Position 601 (Arg-601) interacts with 5-amino-1-(5-phospho-beta-D-ribosyl)imidazole-4-carboxamide.

Belongs to the PurH family. As to quaternary structure, homodimer.

The protein localises to the cytoplasm. The protein resides in the cytosol. The catalysed reaction is (6R)-10-formyltetrahydrofolate + 5-amino-1-(5-phospho-beta-D-ribosyl)imidazole-4-carboxamide = 5-formamido-1-(5-phospho-D-ribosyl)imidazole-4-carboxamide + (6S)-5,6,7,8-tetrahydrofolate. It carries out the reaction IMP + H2O = 5-formamido-1-(5-phospho-D-ribosyl)imidazole-4-carboxamide. It functions in the pathway purine metabolism; IMP biosynthesis via de novo pathway; 5-formamido-1-(5-phospho-D-ribosyl)imidazole-4-carboxamide from 5-amino-1-(5-phospho-D-ribosyl)imidazole-4-carboxamide (10-formyl THF route): step 1/1. The protein operates within purine metabolism; IMP biosynthesis via de novo pathway; IMP from 5-formamido-1-(5-phospho-D-ribosyl)imidazole-4-carboxamide: step 1/1. Bifunctional enzyme that catalyzes the last two steps of purine biosynthesis. Acts as a transformylase that incorporates a formyl group to the AMP analog AICAR (5-amino-1-(5-phospho-beta-D-ribosyl)imidazole-4-carboxamide) to produce the intermediate formyl-AICAR (FAICAR). Also catalyzes the cyclization of FAICAR to IMP. This chain is Bifunctional purine biosynthesis protein ADE16, found in Cryptococcus neoformans var. grubii serotype A (strain H99 / ATCC 208821 / CBS 10515 / FGSC 9487) (Filobasidiella neoformans var. grubii).